Consider the following 329-residue polypeptide: Holliday junction branch migration complex subunit RuvB (329 aa).

The interval 1-181 is large ATPase domain (RuvB-L); sequence MNELLHQHKA…FGIPLHLEFY (181 aa). 9 residues coordinate ATP: leucine 20, arginine 21, glycine 62, lysine 65, threonine 66, threonine 67, arginine 171, tyrosine 181, and arginine 218. Residue threonine 66 coordinates Mg(2+). Residues 182-252 form a small ATPAse domain (RuvB-S) region; the sequence is SVEELMLVIK…FADSALFNLG (71 aa). The head domain (RuvB-H) stretch occupies residues 255-329; sequence KSGLDKMDIK…IEHLMNYKYI (75 aa). DNA contacts are provided by arginine 308 and arginine 313.

Belongs to the RuvB family. Homohexamer. Forms an RuvA(8)-RuvB(12)-Holliday junction (HJ) complex. HJ DNA is sandwiched between 2 RuvA tetramers; dsDNA enters through RuvA and exits via RuvB. An RuvB hexamer assembles on each DNA strand where it exits the tetramer. Each RuvB hexamer is contacted by two RuvA subunits (via domain III) on 2 adjacent RuvB subunits; this complex drives branch migration. In the full resolvosome a probable DNA-RuvA(4)-RuvB(12)-RuvC(2) complex forms which resolves the HJ.

The protein localises to the cytoplasm. It catalyses the reaction ATP + H2O = ADP + phosphate + H(+). Functionally, the RuvA-RuvB-RuvC complex processes Holliday junction (HJ) DNA during genetic recombination and DNA repair, while the RuvA-RuvB complex plays an important role in the rescue of blocked DNA replication forks via replication fork reversal (RFR). RuvA specifically binds to HJ cruciform DNA, conferring on it an open structure. The RuvB hexamer acts as an ATP-dependent pump, pulling dsDNA into and through the RuvAB complex. RuvB forms 2 homohexamers on either side of HJ DNA bound by 1 or 2 RuvA tetramers; 4 subunits per hexamer contact DNA at a time. Coordinated motions by a converter formed by DNA-disengaged RuvB subunits stimulates ATP hydrolysis and nucleotide exchange. Immobilization of the converter enables RuvB to convert the ATP-contained energy into a lever motion, pulling 2 nucleotides of DNA out of the RuvA tetramer per ATP hydrolyzed, thus driving DNA branch migration. The RuvB motors rotate together with the DNA substrate, which together with the progressing nucleotide cycle form the mechanistic basis for DNA recombination by continuous HJ branch migration. Branch migration allows RuvC to scan DNA until it finds its consensus sequence, where it cleaves and resolves cruciform DNA. The sequence is that of Holliday junction branch migration complex subunit RuvB from Anaplasma phagocytophilum (strain HZ).